The sequence spans 307 residues: 2,4-diacetylphloroglucinol hydrolase (307 aa).

Residues His142, Glu173, His283, and Glu287 each coordinate Zn(2+).

It belongs to the DAPG/phloretin hydrolase family. Zn(2+) serves as cofactor.

It catalyses the reaction 2,4-diacetylphloroglucinol + H2O = 2-acetylphloroglucinol + acetate. With respect to regulation, activity is strongly reduced by pyoluteorin, an antifungal compound produced by the bacterium. Its function is as follows. Hydrolase that specifically degrades the potent antimicrobial compound 2,4-diacetylphloroglucinol (DAPG) to equimolar amounts of mildly toxic monoacetylphloroglucinol (MAPG) and acetate. Does not degrade other compounds with structures similar to DAPG, such as MAPG and triacetylphloroglucinol, suggesting strict substrate specificity. Degradation of DAPG to MAPG may provide an additional means of fine-tuning levels of this antibiotic or may help avoid accumulation of a metabolite that at high levels may become toxic to the producing bacterium. The polypeptide is 2,4-diacetylphloroglucinol hydrolase (Pseudomonas protegens (strain DSM 19095 / LMG 27888 / CFBP 6595 / CHA0)).